A 311-amino-acid polypeptide reads, in one-letter code: Glycerol-3-phosphate dehydrogenase [NAD(P)+] (311 aa).

NADPH is bound by residues Trp11, Arg30, Arg31, and Lys95. Lys95, Gly123, and Ser125 together coordinate sn-glycerol 3-phosphate. Ala127 is an NADPH binding site. Sn-glycerol 3-phosphate is bound by residues Lys177, Asp230, Ser240, Arg241, and Asn242. Lys177 acts as the Proton acceptor in catalysis. Residue Arg241 participates in NADPH binding. NADPH-binding residues include Val265 and Glu267.

It belongs to the NAD-dependent glycerol-3-phosphate dehydrogenase family.

The protein resides in the cytoplasm. The catalysed reaction is sn-glycerol 3-phosphate + NAD(+) = dihydroxyacetone phosphate + NADH + H(+). The enzyme catalyses sn-glycerol 3-phosphate + NADP(+) = dihydroxyacetone phosphate + NADPH + H(+). Its pathway is membrane lipid metabolism; glycerophospholipid metabolism. Catalyzes the reduction of the glycolytic intermediate dihydroxyacetone phosphate (DHAP) to sn-glycerol 3-phosphate (G3P), the key precursor for phospholipid synthesis. In Bartonella bacilliformis (strain ATCC 35685 / KC583 / Herrer 020/F12,63), this protein is Glycerol-3-phosphate dehydrogenase [NAD(P)+].